Reading from the N-terminus, the 122-residue chain is Large ribosomal subunit protein uL14 (122 aa).

The protein belongs to the universal ribosomal protein uL14 family. Part of the 50S ribosomal subunit. Forms a cluster with proteins L3 and L19. In the 70S ribosome, L14 and L19 interact and together make contacts with the 16S rRNA in bridges B5 and B8.

Functionally, binds to 23S rRNA. Forms part of two intersubunit bridges in the 70S ribosome. In Nitratiruptor sp. (strain SB155-2), this protein is Large ribosomal subunit protein uL14.